The chain runs to 612 residues: Sorting nexin MVP1 (612 aa).

The segment at 35-68 (SSAPSPAGSVTPARATASASEGRNIAANGNKEEG) is disordered. The PX domain occupies 226–334 (WKDQERIVVT…NIFLTSSSFE (109 aa)). Positions 263, 265, 289, and 301 each coordinate a 1,2-diacyl-sn-glycero-3-phospho-(1D-myo-inositol-3-phosphate).

Belongs to the sorting nexin family.

Its subcellular location is the cytoplasm. It is found in the membrane. In terms of biological role, required for vacuolar protein sorting. This chain is Sorting nexin MVP1 (MVP1), found in Cryptococcus neoformans var. neoformans serotype D (strain B-3501A) (Filobasidiella neoformans).